Consider the following 161-residue polypeptide: Large ribosomal subunit protein uL10 (161 aa).

It belongs to the universal ribosomal protein uL10 family. Part of the ribosomal stalk of the 50S ribosomal subunit. The N-terminus interacts with L11 and the large rRNA to form the base of the stalk. The C-terminus forms an elongated spine to which L12 dimers bind in a sequential fashion forming a multimeric L10(L12)X complex.

In terms of biological role, forms part of the ribosomal stalk, playing a central role in the interaction of the ribosome with GTP-bound translation factors. In Campylobacter curvus (strain 525.92), this protein is Large ribosomal subunit protein uL10.